The sequence spans 899 residues: MQKTDGIRIPGVILDELKTLDYSQDERFSISEGKKRRRGNGKHLSRKEKRKMERADKKRKIISTREINSSRLKSAPTSEKRSANAGVKNVGKQANGKNPISSDESESNENWDSDEVLTDEVAEESGEQAMSAEETMKKLESLKRKAKGIQGAENSGEIKGNSYEKKHIRNRDTNENFVSYPLAPSDRSAFERDEMDMQYYAKKLGLKGERKAIHAKDEFDAIGGLLEGLEYFENYGKSDEEYGDFATETNSMRKDDEASEKAFSSDDDLSASDFEDSDGLSESDNDSVADSDDNYRREKENPYVAPTQSVESYVPPSLRKKLDDSENNSTLSEISKKVNSSLNKLSDSNITIIITDLNRLYDSLPRQYVTESLTKGILNIISQNQKLLDGFIMNYAALAYTLSKLRGIEVGAFFIQKTVEAFLHHYEEEMENILKDQQSKISSKICINIATLLSYCYNFGFVSCRLIYDIIRIFVADPNEFTTELLLRIISISGQLIRGDDPSALRDIRSELLKNAKNLKEQSPRLRFLMDTMSDLKNNRLKPSILATDHHPLKKNLQSILNSSSSWEPLQVSLEDIKNIDSKGKWWLVGASWRGNMENAFEVSINNENDASKSKKSKISIEDDLLDDIPDWNIIARQQRMNTDIRRAIFISIMSAQDYLDAFSKLEKLSLKNKQVLEIPRIVLHCLLADSGSNGYNHYYALVANKICERYSHLSKSFQFLFWDVIKKFEDKEFDSESDTDEEDDLDDKEKLLRISNQGRFFGSLLANDILKLDVFKHVPFMGGLNTEGMLFMEILLFQLFLTVAKKSEKKLKMDESGNKRIIYSDDYLRDVLTKNVKSENMLFILKGLKWFINKKFRYHNFLAGKKGDKAFDRDERRLAWASKAAKSIIDKELENIDS.

The span at 24–33 (QDERFSISEG) shows a compositional bias: basic and acidic residues. Disordered stretches follow at residues 24 to 181 (QDER…VSYP) and 248 to 326 (ETNS…DDSE). Residues 34 to 49 (KKRRRGNGKHLSRKEK) are compositionally biased toward basic residues. The segment covering 65-77 (REINSSRLKSAPT) has biased composition (polar residues). Positions 103–126 (DESESNENWDSDEVLTDEVAEESG) are enriched in acidic residues. Basic and acidic residues-rich tracts occupy residues 134–143 (ETMKKLESLK), 162–174 (SYEK…RDTN), and 251–264 (SMRK…KAFS). Over residues 265–292 (SDDDLSASDFEDSDGLSESDNDSVADSD) the composition is skewed to acidic residues. The 206-residue stretch at 335–540 (SKKVNSSLNK…DTMSDLKNNR (206 aa)) folds into the MIF4G domain. One can recognise an MI domain in the interval 644-781 (DIRRAIFISI…KLDVFKHVPF (138 aa)). Residue Ser-736 is modified to Phosphoserine.

This sequence belongs to the CWC22 family. As to quaternary structure, interacts with PLC1.

The protein resides in the nucleus. The protein localises to the nucleolus. Functionally, involved in osmoregulatory glycerol response, probably through its interaction with PLC1 which regulates the expression of GDP1. The polypeptide is Suppressor of glycerol defect protein 1 (SGD1) (Saccharomyces cerevisiae (strain ATCC 204508 / S288c) (Baker's yeast)).